A 224-amino-acid chain; its full sequence is Probable 2' cyclic ADP-D-ribose synthase BdTIR (224 aa).

The 128-residue stretch at 51-178 (SRYEVFINHR…RFKFALREAK (128 aa)) folds into the TIR domain. NAD(+) is bound by residues 60-65 (RGVDTK) and Gly-93. Residue Glu-127 is part of the active site.

In terms of assembly, homodimer.

It catalyses the reaction NAD(+) + H2O = ADP-D-ribose + nicotinamide + H(+). The enzyme catalyses NADP(+) + H2O = ADP-D-ribose 2'-phosphate + nicotinamide + H(+). It carries out the reaction NAD(+) = 2'cADPR + nicotinamide + H(+). In terms of biological role, an NAD(+) hydrolase (NADase). Upon activation catalyzes cleavage of NAD(+) into ADP-D-ribose (ADPR) and nicotinamide; NAD(+) cleavage triggers a defense system that promotes cell death. In addition to ADPR, also generates a cyclization variant of cyclic ADPR termed v-cADPR (2'cADPR). Also hydrolyzes NADP(+), but not other NAD(+)-related molecules. v-cADPR activates ThsA, an NAD(+) hydrolase in B.cereus (AC J8G6Z1). Probably makes 2'cADPR; the cADPR made by this protein is bound by cmTad1 (AC P0DW61) and activates ThsA from B.cereus. Boiling cmTad1 bound to the cyclic nucleotide releases 2'cADPR, strongly suggesting it is the product of this protein. The sequence is that of Probable 2' cyclic ADP-D-ribose synthase BdTIR from Brachypodium distachyon (Purple false brome).